Reading from the N-terminus, the 432-residue chain is MRLLGAHRAALLVLACVVVVVIHGLGEAEALGGGGGFVRAQGTRFVLDGNPYYANGFNAYWLMLLAADPSQRGKVSAALGEAAGHGLTVARTWAFSDGGGGNALQLSPGNYNENTFKGLDFVLSEARKYGIKVILSLVDNYDSFGGRKQYVNWARAQGQGIGSDDEFFTNPVVKGFYKNHVKTVLTRKNTITGVAYRDDPTILAWELMNEPRCQSDLSGRTVQSWITEMAAHVKSIDRNHMLEVGLEGFYGASSPSRIAAVNPSGYQLGTDFIANNQVPGIDFATVHSYPDQWLSGKDDQAQLGFMGRWLDAHIADAQAVLRKPLLIAEFGKSWKDPGYSSGQRDALYGTVYAKIYESARRGGATVGGLFWQLLVPGMDSYRDGYEVVFGETPSTTGVITTNSRRLRFLSKAFARARQAQPARGKGRHNGGK.

An N-terminal signal peptide occupies residues 1 to 28 (MRLLGAHRAALLVLACVVVVVIHGLGEA). 2 residues coordinate substrate: Trp-93 and Asn-209. Residue Glu-210 is the Proton donor of the active site. Tyr-289 contacts substrate. The active-site Nucleophile is the Glu-329. Trp-371 contributes to the substrate binding site.

This sequence belongs to the glycosyl hydrolase 5 (cellulase A) family. Ubiquitous.

It localises to the secreted. The enzyme catalyses Random hydrolysis of (1-&gt;4)-beta-D-mannosidic linkages in mannans, galactomannans and glucomannans.. This chain is Mannan endo-1,4-beta-mannosidase 1 (MAN1), found in Oryza sativa subsp. japonica (Rice).